A 379-amino-acid chain; its full sequence is Deoxyuridine 5'-triphosphate nucleotidohydrolase (379 aa).

This sequence belongs to the dUTPase family. Mg(2+) serves as cofactor.

It catalyses the reaction dUTP + H2O = dUMP + diphosphate + H(+). Its function is as follows. Involved in nucleotide metabolism: produces dUMP, the immediate precursor of thymidine nucleotides and decreases the intracellular concentration of dUTP to avoid uracil incorporation into viral DNA. This is Deoxyuridine 5'-triphosphate nucleotidohydrolase from Human herpesvirus 7 (strain JI) (HHV-7).